A 381-amino-acid chain; its full sequence is Phthiodiolone/phenolphthiodiolone dimycocerosates ketoreductase (381 aa).

It belongs to the mer family. Phthiodiolone/phenolphthiodiolone dimycocerosates ketoreductase subfamily.

Catalyzes the reduction of the keto moiety of phthiodiolone dimycocerosates (DIM B) and glycosylated phenolphthiodiolone dimycocerosates to form the intermediate compounds phthiotriol and glycosylated phenolphthiotriol dimycocerosates during phthiocerol dimycocerosates (DIM A) and glycosylated phenolphthiocerol dimycocerosates (PGL) biosynthesis. This chain is Phthiodiolone/phenolphthiodiolone dimycocerosates ketoreductase, found in Mycobacterium bovis (strain ATCC BAA-935 / AF2122/97).